Reading from the N-terminus, the 716-residue chain is Cytoplasmic polyadenylation element-binding protein 3 (716 aa).

Positions 1–11 are enriched in basic and acidic residues; it reads MQDDLLMDKSK. Disordered regions lie at residues 1–118 and 162–209; these read MQDD…WSTG and AQTQ…RSAA. 2 stretches are compositionally biased toward low complexity: residues 13–31 and 54–63; these read QPQS…QQLQ and SSAVPALSPA. Positions 91–100 are enriched in pro residues; the sequence is PQQPPPPQEP. The span at 107 to 118 shows a compositional bias: polar residues; that stretch reads LSPSFGSTWSTG. Pro residues predominate over residues 169–186; the sequence is QPPPPAPQPPQPAQPPQA. Positions 187–209 are enriched in low complexity; sequence QPSQQRRSPASPSQAPYAQRSAA. A phosphoserine mark is found at S194, S197, and S291. The residue at position 309 (R309) is an Asymmetric dimethylarginine. S419 and S420 each carry phosphoserine. 2 consecutive RRM domains span residues 459 to 550 and 567 to 649; these read RKVF…PWNL and KTIF…PYVL.

Belongs to the RRM CPEB family. In terms of assembly, following synaptic activity, aggregates to form amyloid-like oligomers. Aggregation requires an intact actin cytoskeleton. Interacts with STAT5B; this inhibits STAT5B-mediated transcriptional activation. Interacts with E3 ubiquitin-protein ligase NEURL1; this leads to monoubiquitination and activation of CPEB3. Interacts with CAPN2; this leads to cleavage of CPEB3. Interacts (via C-terminal RNA-binding region) with TOB1; TOB1 also binds CNOT7/CAF1 and recruits it to CPEB3 to form a ternary complex. Interacts with SUMO-conjugating enzyme UBC9. Interacts with IPO5; the interaction is enhanced in a RAN-regulated manner following neuronal stimulation and mediates CPEB3 nuclear import. Interacts with exportin XPO1/CRM1. Post-translationally, activated by NEURL1-mediated monoubiquitination, resulting in the growth of new dendritic spines and increased levels of GRIA1 and GRIA2. NEURL1-mediated monoubiquitination facilitates synaptic plasticity and hippocampal-dependent memory storage. Under basal unstimulated conditions when CPEB3 is mainly unaggregated, sumoylated and acts as a translational repressor. Following neuronal stimulation, becomes desumoylated and aggregated which is required for the translation of mRNA targets and for dendritic filopodia formation. In terms of processing, following neuronal stimulation, cleaved by CAPN2 which abolishes its translational repressor activity, leading to translation of CPEB3 target mRNAs. Post-translationally, phosphorylation is enhanced by neuronal stimulation. Highly expressed in brain (at protein level). In brain, expressed in the hippocampus, granule cells and interneurons of the cerebellum, and mitral cells of the olfactory bulb (at protein level). Detected in the spinal cord and in peripheral dorsal root ganglia (at protein level). In the retina, strongly expressed in the retinal ganglion layer and, to a lesser extent, in the inner margin of the inner nuclear layer with expression also detected in the inner and outer plexiform layers (at protein level). Highly expressed in brain and heart, less in liver, kidney, embryo, skeletal muscle, lung and ovary. Weakly expressed in granular cells of dentate gyrus and the pyramidal cells of CA3 and CA1 of the hippocampus.

It is found in the cytoplasm. Its subcellular location is the nucleus. The protein localises to the synapse. It localises to the cell projection. The protein resides in the dendrite. It is found in the postsynaptic density. Functionally, sequence-specific RNA-binding protein which acts as a translational repressor in the basal unstimulated state but, following neuronal stimulation, acts as a translational activator. In contrast to CPEB1, does not bind to the cytoplasmic polyadenylation element (CPE), a uridine-rich sequence element within the mRNA 3'-UTR, but binds to a U-rich loop within a stem-loop structure. Required for the consolidation and maintenance of hippocampal-based long term memory. In the basal state, binds to the mRNA 3'-UTR of the glutamate receptors GRIA1 and GRIA2 and negatively regulates their translation. Also represses the translation of DLG4, GRIN1 GRIN2A and GRIN2B. When activated, acts as a translational activator of GRIA1 and GRIA2. In the basal state, suppresses SUMO2 translation but activates it following neuronal stimulation. Binds to the 3'-UTR of TRPV1 mRNA and represses TRPV1 translation which is required to maintain normal thermoception. Binds actin mRNA, leading to actin translational repression in the basal state and to translational activation following neuronal stimulation. Negatively regulates target mRNA levels by binding to TOB1 which recruits CNOT7/CAF1 to a ternary complex and this leads to target mRNA deadenylation and decay. In addition to its role in translation, binds to and inhibits the transcriptional activation activity of STAT5B without affecting its dimerization or DNA-binding activity. This, in turn, represses transcription of the STAT5B target gene EGFR which has been shown to play a role in enhancing learning and memory performance. In contrast to CPEB1, CPEB2 and CPEB4, not required for cell cycle progression. The chain is Cytoplasmic polyadenylation element-binding protein 3 (Cpeb3) from Mus musculus (Mouse).